The following is a 61-amino-acid chain: Large ribosomal subunit protein bL28 (61 aa).

Residues 1 to 24 (MAKDYVTGKKTTFGNKRSHSLNPT) are disordered. Residues 9–23 (KKTTFGNKRSHSLNP) show a composition bias toward polar residues.

The protein belongs to the bacterial ribosomal protein bL28 family.

The protein is Large ribosomal subunit protein bL28 of Lactobacillus acidophilus (strain ATCC 700396 / NCK56 / N2 / NCFM).